Here is a 446-residue protein sequence, read N- to C-terminus: MTEQKKKLEKLSGVKGMNDILPQEAGLWEFFETTVKSMLRSYGYQNIRTPIIEHTQLFKRGIGEVTDIVEKEMYSFTDALNGENLTMRPENTAAVVRAAIEHNMLYDGPKRLWYIGPMFRHERPQRGRYRQFHQVGVEALGFAGPDADAEIIMMCQRLWDDLGLMGIKLELNSLGLAHERAAHRVELIAYLEKHMDVLDEEAKRRLYTNPLRVLDTKNPAMQEVAQNAPKLIDFLGEESRAHFEGLQRILKANNIPFTINQRLVRGLDYYNLTVFEWVTDKLGAQGTVAAGGRYDPLIEQLGGKPTAACGWAMGIERILELLKEEQLVPEDEGCDVYVVHQGEAAREQAFIIAERLRDTGLDVILHCSADGQTASFKSQMKRADASGAAFAVVLGEDEIANGTVGVKPLRDTNADGGKNEQHNVPAEDLTEFLINAMVATAEDGDD.

It belongs to the class-II aminoacyl-tRNA synthetase family. Homodimer.

It is found in the cytoplasm. The enzyme catalyses tRNA(His) + L-histidine + ATP = L-histidyl-tRNA(His) + AMP + diphosphate + H(+). The sequence is that of Histidine--tRNA ligase from Paraburkholderia xenovorans (strain LB400).